The chain runs to 596 residues: Elongation factor 4 (596 aa).

A tr-type G domain is found at 2 to 184 (KHIRNFSIIA…VIVAQIPSPE (183 aa)). GTP is bound by residues 14 to 19 (DHGKST) and 131 to 134 (NKID).

It belongs to the TRAFAC class translation factor GTPase superfamily. Classic translation factor GTPase family. LepA subfamily.

It localises to the cell inner membrane. The catalysed reaction is GTP + H2O = GDP + phosphate + H(+). Required for accurate and efficient protein synthesis under certain stress conditions. May act as a fidelity factor of the translation reaction, by catalyzing a one-codon backward translocation of tRNAs on improperly translocated ribosomes. Back-translocation proceeds from a post-translocation (POST) complex to a pre-translocation (PRE) complex, thus giving elongation factor G a second chance to translocate the tRNAs correctly. Binds to ribosomes in a GTP-dependent manner. The protein is Elongation factor 4 of Shewanella sediminis (strain HAW-EB3).